The following is a 71-amino-acid chain: Large ribosomal subunit protein uL29 (71 aa).

It belongs to the universal ribosomal protein uL29 family.

This chain is Large ribosomal subunit protein uL29, found in Rickettsia typhi (strain ATCC VR-144 / Wilmington).